Reading from the N-terminus, the 88-residue chain is Large ribosomal subunit protein bL27 (88 aa).

Residues 1 to 21 (MAHKKGQGSTQNNRDSAGRRL) form a disordered region.

The protein belongs to the bacterial ribosomal protein bL27 family.

This Helicobacter pylori (strain J99 / ATCC 700824) (Campylobacter pylori J99) protein is Large ribosomal subunit protein bL27.